A 489-amino-acid chain; its full sequence is GTPase Der (489 aa).

2 EngA-type G domains span residues Pro3 to Glu166 and Ile195 to Val368. Residues Gly9 to Ser16, Asp56 to Ile60, Asn118 to Asp121, Gly201 to Ser208, Asp248 to Val252, and Asn313 to Asp316 contribute to the GTP site. In terms of domain architecture, KH-like spans Thr369 to Glu453. The disordered stretch occupies residues Gly451–Arg489. Basic residues predominate over residues Asn469–Arg489.

This sequence belongs to the TRAFAC class TrmE-Era-EngA-EngB-Septin-like GTPase superfamily. EngA (Der) GTPase family. Associates with the 50S ribosomal subunit.

Its function is as follows. GTPase that plays an essential role in the late steps of ribosome biogenesis. The chain is GTPase Der from Pseudomonas syringae pv. tomato (strain ATCC BAA-871 / DC3000).